The following is a 50-amino-acid chain: Monellin chain B (50 aa).

As to quaternary structure, heterodimer of an A chain and a B chain.

Taste-modifying protein; intensely sweet-tasting protein. This chain is Monellin chain B, found in Dioscoreophyllum cumminsii (Serendipity berry).